The primary structure comprises 43 residues: Cytochrome b559 subunit beta (43 aa).

A helical membrane pass occupies residues 18–34 (WLAVHGLAIPTVFFLGG). H22 lines the heme pocket.

Belongs to the PsbE/PsbF family. In terms of assembly, heterodimer of an alpha subunit and a beta subunit. PSII is composed of 1 copy each of membrane proteins PsbA, PsbB, PsbC, PsbD, PsbE, PsbF, PsbH, PsbI, PsbJ, PsbK, PsbL, PsbM, PsbT, PsbX, PsbY, PsbZ, Psb30/Ycf12, at least 3 peripheral proteins of the oxygen-evolving complex and a large number of cofactors. It forms dimeric complexes. The cofactor is heme b.

The protein resides in the plastid. Its subcellular location is the chloroplast thylakoid membrane. In terms of biological role, this b-type cytochrome is tightly associated with the reaction center of photosystem II (PSII). PSII is a light-driven water:plastoquinone oxidoreductase that uses light energy to abstract electrons from H(2)O, generating O(2) and a proton gradient subsequently used for ATP formation. It consists of a core antenna complex that captures photons, and an electron transfer chain that converts photonic excitation into a charge separation. This is Cytochrome b559 subunit beta from Thalassiosira pseudonana (Marine diatom).